A 314-amino-acid chain; its full sequence is Acetyl-coenzyme A carboxylase carboxyl transferase subunit beta (314 aa).

The 270-residue stretch at 24-293 (LWIKCPDTGQ…IDAAPEPSPA (270 aa)) folds into the CoA carboxyltransferase N-terminal domain. The interval 283-314 (EIDAAPEPSPAAEEPAEPMPAPEAAAPSAPPA) is disordered. Low complexity-rich tracts occupy residues 284 to 295 (IDAAPEPSPAAE) and 304 to 314 (PEAAAPSAPPA).

It belongs to the AccD/PCCB family. In terms of assembly, acetyl-CoA carboxylase is a heterohexamer composed of biotin carboxyl carrier protein (AccB), biotin carboxylase (AccC) and two subunits each of ACCase subunit alpha (AccA) and ACCase subunit beta (AccD).

It is found in the cytoplasm. The enzyme catalyses N(6)-carboxybiotinyl-L-lysyl-[protein] + acetyl-CoA = N(6)-biotinyl-L-lysyl-[protein] + malonyl-CoA. It functions in the pathway lipid metabolism; malonyl-CoA biosynthesis; malonyl-CoA from acetyl-CoA: step 1/1. Functionally, component of the acetyl coenzyme A carboxylase (ACC) complex. Biotin carboxylase (BC) catalyzes the carboxylation of biotin on its carrier protein (BCCP) and then the CO(2) group is transferred by the transcarboxylase to acetyl-CoA to form malonyl-CoA. The protein is Acetyl-coenzyme A carboxylase carboxyl transferase subunit beta of Nitrobacter hamburgensis (strain DSM 10229 / NCIMB 13809 / X14).